Here is a 674-residue protein sequence, read N- to C-terminus: MDKAKAQQEIGKLRAEIERHNRLYYLEAKPEISDFEFDKLLERLIALETEFPELVTPDSPSQRVGGGITKEFPTVIHREPMLSLSNTYSIGEVSDFCTRVEKLVAAEGGGTPEYVAELKYDGVAISLFYRDGLLVRGSTRGDGRQGDEITANLKTIPSIPLRLQSAGGSLFDAAVNGEVEVRGEVYMRKDDFERLNEERPEEERFANPRNATAGTLKLQDSAEVARRRMSFVAYYLKGHDGEAPTHLRRLEQLKCMGFMTGAAARLCKGMDEIANFIGEWSEKRWTLPYETDGVVLKLNEVGLWDRLGATAKSPRWAIAYKYPAQQAKTVLQGVVFQVGRLGTITPVAELKPTKLAGSTVSRSTLHNFDEIERLGVRIGDHVMIEKSGEVIPKVVSVVLDERPAETAEIEAPSECPVCGTKLERHEGEVSWYCPNEEGCPAQKRGRILHFASRNALDIQNLGESLVSQLVERGFVSDAGDLYSLTQEQLASLDRMAAKSAQNVLDALEKSKKQSYARLLFALGIRHVGAATARELAHACPSIDRLREMGEEELAAVPDIGPVIAASIRDFFAKPWVAAMLEKLAAAGLPMQAGEEKALVNTNFEGQSVIFTGGLERHVRQQAEEMVRERGGKIVSSVSKKTTLVVAGKEAGSKLEKAMKLGVRVIDEDEFERML.

NAD(+) contacts are provided by residues 34-38, 83-84, and E117; these read DFEFD and SL. K119 serves as the catalytic N6-AMP-lysine intermediate. NAD(+) contacts are provided by R140, E184, K297, and K321. Zn(2+) contacts are provided by C415, C418, C433, and C439. One can recognise a BRCT domain in the interval 598 to 674; the sequence is LVNTNFEGQS…IDEDEFERML (77 aa).

This sequence belongs to the NAD-dependent DNA ligase family. LigA subfamily. Requires Mg(2+) as cofactor. Mn(2+) is required as a cofactor.

It carries out the reaction NAD(+) + (deoxyribonucleotide)n-3'-hydroxyl + 5'-phospho-(deoxyribonucleotide)m = (deoxyribonucleotide)n+m + AMP + beta-nicotinamide D-nucleotide.. Its function is as follows. DNA ligase that catalyzes the formation of phosphodiester linkages between 5'-phosphoryl and 3'-hydroxyl groups in double-stranded DNA using NAD as a coenzyme and as the energy source for the reaction. It is essential for DNA replication and repair of damaged DNA. The sequence is that of DNA ligase from Chlorobaculum parvum (strain DSM 263 / NCIMB 8327) (Chlorobium vibrioforme subsp. thiosulfatophilum).